The sequence spans 268 residues: MRLIIRPTYEDVSKWAANHVAQKIKEFSPTKKKPFILGLPTGSSPIGMYKNLIELNKSGKISFQNVITFNMDEYIGIEQNHPESYHSFMWKNFFSHIDIKKENINILNGNALNLEKECEEYEKKIKSFGGIMLFVGGIGPDGHIAFNEPGSSLTSRTRIKTLTQDTIIANSRFFEGNVNKVPKSALTVGIGTIMDSQEILIIVNGHNKARALKHAIEKGINHMWTISALQLHKNAIIVSDKNATYELKVGTVEYFNDIERKNFNNDLK.

D72 (proton acceptor; for enolization step) is an active-site residue. The For ring-opening step role is filled by D141. H143 (proton acceptor; for ring-opening step) is an active-site residue. E148 acts as the For ring-opening step in catalysis.

The protein belongs to the glucosamine/galactosamine-6-phosphate isomerase family. NagB subfamily.

The catalysed reaction is alpha-D-glucosamine 6-phosphate + H2O = beta-D-fructose 6-phosphate + NH4(+). It participates in amino-sugar metabolism; N-acetylneuraminate degradation; D-fructose 6-phosphate from N-acetylneuraminate: step 5/5. Its activity is regulated as follows. Allosterically activated by N-acetylglucosamine 6-phosphate (GlcNAc6P). In terms of biological role, catalyzes the reversible isomerization-deamination of glucosamine 6-phosphate (GlcN6P) to form fructose 6-phosphate (Fru6P) and ammonium ion. This chain is Glucosamine-6-phosphate deaminase, found in Borreliella afzelii (strain PKo) (Borrelia afzelii).